We begin with the raw amino-acid sequence, 311 residues long: Maspardin (311 aa).

In terms of domain architecture, AB hydrolase-1 spans 86 to 159; it reads EFCDGFRKLL…NSFWLMPSFM (74 aa).

It belongs to the AB hydrolase superfamily.

The protein resides in the cytoplasm. The polypeptide is Maspardin (spg21) (Danio rerio (Zebrafish)).